The chain runs to 469 residues: ATP synthase subunit beta (469 aa).

Residue 156–163 participates in ATP binding; sequence GGAGVGKT.

It belongs to the ATPase alpha/beta chains family. In terms of assembly, F-type ATPases have 2 components, CF(1) - the catalytic core - and CF(0) - the membrane proton channel. CF(1) has five subunits: alpha(3), beta(3), gamma(1), delta(1), epsilon(1). CF(0) has three main subunits: a(1), b(2) and c(9-12). The alpha and beta chains form an alternating ring which encloses part of the gamma chain. CF(1) is attached to CF(0) by a central stalk formed by the gamma and epsilon chains, while a peripheral stalk is formed by the delta and b chains.

It is found in the cell membrane. It catalyses the reaction ATP + H2O + 4 H(+)(in) = ADP + phosphate + 5 H(+)(out). Its function is as follows. Produces ATP from ADP in the presence of a proton gradient across the membrane. The catalytic sites are hosted primarily by the beta subunits. This is ATP synthase subunit beta from Bacillus anthracis (strain CDC 684 / NRRL 3495).